The chain runs to 267 residues: Diphthine--ammonia ligase (267 aa).

The residue at position 97 (Tyr97) is a Phosphotyrosine.

The protein belongs to the Diphthine--ammonia ligase family.

The catalysed reaction is diphthine-[translation elongation factor 2] + NH4(+) + ATP = diphthamide-[translation elongation factor 2] + AMP + diphosphate + H(+). It functions in the pathway protein modification; peptidyl-diphthamide biosynthesis. In terms of biological role, amidase that catalyzes the last step of diphthamide biosynthesis using ammonium and ATP. Diphthamide biosynthesis consists in the conversion of an L-histidine residue in the translation elongation factor eEF-2 (EEF2) to diphthamide. This Rattus norvegicus (Rat) protein is Diphthine--ammonia ligase (Dph6).